Reading from the N-terminus, the 445-residue chain is MSNRKYFGTDGIRGRVGDAPITPDFVLKLGWAAGKVLARHGSRKIIIGKDTRISGYMLESALEAGLAAAGLSALFTGPMPTPAVAYLTRTFRAEAGIVISASHNPFYDNGIKFFSIDGTKLPDAVEEAIEAEMEKEISCVDSAELGKASRIVDAAGRYIEFCKATFPNELSLSELKIVVDCANGATYHIAPNVLRELGANVIAIGCEPNGVNINAEVGATDVRALQARVLAEKADLGIAFDGDGDRVIMVDHEGNKVDGDQIMYIIAREGLRQGQLRGGAVGTLMSNMGLELALKQLGIPFARAKVGDRYVLEKMQEKGWRIGAENSGHVILLDKTTTGDGIVAGLQVLAAMARNHMSLHDLCSGMKMFPQILVNVRYTAGSGDPLEHESVKAVTAEVEVALGNRGRVLLRKSGTEPLIRVMVEGEDEAQVTEFAHRIADAVKAV.

Residue Ser102 is the Phosphoserine intermediate of the active site. The Mg(2+) site is built by Ser102, Asp241, Asp243, and Asp245. Ser102 bears the Phosphoserine mark.

It belongs to the phosphohexose mutase family. Mg(2+) serves as cofactor. Activated by phosphorylation.

It carries out the reaction alpha-D-glucosamine 1-phosphate = D-glucosamine 6-phosphate. In terms of biological role, catalyzes the conversion of glucosamine-6-phosphate to glucosamine-1-phosphate. The chain is Phosphoglucosamine mutase from Escherichia coli (strain 55989 / EAEC).